Reading from the N-terminus, the 248-residue chain is ATP synthase subunit a, chloroplastic (248 aa).

Transmembrane regions (helical) follow at residues 35-55 (GQVF…AIAG), 94-114 (IPYI…GALI), 133-153 (INTT…AGLS), 202-222 (VFTL…GLFA), and 224-244 (SIQA…ALEG).

Belongs to the ATPase A chain family. As to quaternary structure, F-type ATPases have 2 components, CF(1) - the catalytic core - and CF(0) - the membrane proton channel. CF(1) has five subunits: alpha(3), beta(3), gamma(1), delta(1), epsilon(1). CF(0) has four main subunits: a, b, b' and c.

It is found in the plastid. The protein localises to the chloroplast thylakoid membrane. Key component of the proton channel; it plays a direct role in the translocation of protons across the membrane. The protein is ATP synthase subunit a, chloroplastic of Antithamnion sp. (Red alga).